We begin with the raw amino-acid sequence, 403 residues long: Serine/threonine transporter SstT (403 aa).

The next 10 membrane-spanning stretches (helical) occupy residues 15–35 (LGLI…AIVW), 49–69 (FISA…MTAI), 85–105 (LLYV…SFIF), 142–162 (ALLN…GMML), 183–203 (IVQL…AGTL), 218–238 (LAVI…LIVF), 246–268 (YPLV…SSAA), 289–309 (ISIP…ISVI), 317–337 (LGIG…SLAA), and 362–382 (PDVA…QDAT).

The protein belongs to the dicarboxylate/amino acid:cation symporter (DAACS) (TC 2.A.23) family.

Its subcellular location is the cell inner membrane. The enzyme catalyses L-serine(in) + Na(+)(in) = L-serine(out) + Na(+)(out). It carries out the reaction L-threonine(in) + Na(+)(in) = L-threonine(out) + Na(+)(out). Functionally, involved in the import of serine and threonine into the cell, with the concomitant import of sodium (symport system). This is Serine/threonine transporter SstT from Chromohalobacter salexigens (strain ATCC BAA-138 / DSM 3043 / CIP 106854 / NCIMB 13768 / 1H11).